Reading from the N-terminus, the 126-residue chain is Ribulose bisphosphate carboxylase small subunit, chloroplastic 1 (126 aa).

This sequence belongs to the RuBisCO small chain family. Heterohexadecamer of 8 large and 8 small subunits.

Its subcellular location is the plastid. It localises to the chloroplast. RuBisCO catalyzes two reactions: the carboxylation of D-ribulose 1,5-bisphosphate, the primary event in carbon dioxide fixation, as well as the oxidative fragmentation of the pentose substrate. Both reactions occur simultaneously and in competition at the same active site. Although the small subunit is not catalytic it is essential for maximal activity. In Acetabularia peniculus (Green alga), this protein is Ribulose bisphosphate carboxylase small subunit, chloroplastic 1.